The primary structure comprises 492 residues: 3-ketoacyl-CoA synthase 5 (492 aa).

The next 2 helical transmembrane spans lie at 20–40 (LINN…AIEL) and 59–79 (LLHI…YFMS). The FAE domain maps to 76–365 (YFMSKPRTVY…FLSSLIGRKI (290 aa)). Residues Cys220, His299, His383, His387, His416, and Asn420 contribute to the active site.

It belongs to the thiolase-like superfamily. Chalcone/stilbene synthases family. As to expression, expressed in siliques, flowers, leaves and seedlings.

It localises to the membrane. It catalyses the reaction a very-long-chain acyl-CoA + malonyl-CoA + H(+) = a very-long-chain 3-oxoacyl-CoA + CO2 + CoA. It participates in lipid metabolism; fatty acid biosynthesis. Its activity is regulated as follows. Inhibited by K3 herbicides such as alachlor, allidochlor, anilofos, cafenstrole and flufenacet. Strongly inhibited by metazachlor and mefluidide. Mediates mostly the synthesis of VLCFAs from 26 to 30 carbons in length (e.g. C20:1, C26, C28, C30). The sequence is that of 3-ketoacyl-CoA synthase 5 from Arabidopsis thaliana (Mouse-ear cress).